We begin with the raw amino-acid sequence, 982 residues long: Protein cramped (982 aa).

Disordered stretches follow at residues 1–37, 71–111, 323–349, 407–456, and 822–851; these read MEEL…GGGA, QKMK…GSGK, SLPS…ASLD, NKRL…SSGD, and GTSS…QEPG. Positions 7–20 are enriched in pro residues; sequence QPPPPPLTQPPPPS. Over residues 21-30 the composition is skewed to low complexity; that stretch reads SSVSIEEPLP. A compositionally biased stretch (basic and acidic residues) spans 86-98; it reads SEREPNKKEEKAA. The segment covering 100–111 has biased composition (polar residues); that stretch reads KTPSQLKTGSGK. Residues 109-173 form the SANT domain; sequence SGKTTWTNVE…HYYQTHHKIC (65 aa). Over residues 410-425 the composition is skewed to basic and acidic residues; that stretch reads LRTESGSEKRSPETKK. A phosphoserine mark is found at Ser431 and Ser437. The segment covering 822–833 has biased composition (low complexity); it reads GTSSAGISTSGS.

Belongs to the cramped family. As to expression, ubiquitously expressed throughout embryonic development. High expression is detected in CNS and gonads.

Its subcellular location is the nucleus. Polycomb group (Pc-G) genes are needed to maintain expression patterns of the homeotic selector genes of the Antennapedia (Antp-C) and Bithorax (Bx-C) complexes, and hence for the maintenance of segmental determination. Can act as a modifier of position effect variegation (PEV). This Drosophila melanogaster (Fruit fly) protein is Protein cramped (crm).